A 165-amino-acid chain; its full sequence is AILTGVPYYILPSTSRAGFSPDNLRKNTSQPSCPLDLITQLRFPRRIGVPVIFTPQNSSLKVVPLSHNLNIHTCSDLWFCPESKIWTVKSSSIHRGLVVTTGGTFRSLGSWFRIERHGDSYKLVHCPRGSTPCRDVGIETVGGGGRRYLAPRDRPLAVRFTRASG.

N-linked (GlcNAc...) asparagine glycans are attached at residues N27 and N57. Cystine bridges form between C33-C80 and C126-C133.

This sequence belongs to the protease inhibitor I3 (leguminous Kunitz-type inhibitor) family. As to quaternary structure, dimer.

Functionally, glucose and N-acetylglucosamine binding lectin. Has hemagglutinating activity against human and rabbit erythrocytes which does not require divalent cations. Inhibits factor Xa and, to a lesser extent, trypsin. Does not inhibit neutrophil elastase, human plasma kallikrein, papain, human plasmin, porcine pancreatic kallikrein and bovin chymotrypsin. Has insecticidal activity against the termite species N.corniger. Induces apoptosis in prostrate cancer cell lines DU145 and PC3. The protein is Bark lectin isoform 1 of Crateva tapia (Garlic-pear tree).